A 160-amino-acid chain; its full sequence is SsrA-binding protein (160 aa).

The protein belongs to the SmpB family.

Its subcellular location is the cytoplasm. In terms of biological role, required for rescue of stalled ribosomes mediated by trans-translation. Binds to transfer-messenger RNA (tmRNA), required for stable association of tmRNA with ribosomes. tmRNA and SmpB together mimic tRNA shape, replacing the anticodon stem-loop with SmpB. tmRNA is encoded by the ssrA gene; the 2 termini fold to resemble tRNA(Ala) and it encodes a 'tag peptide', a short internal open reading frame. During trans-translation Ala-aminoacylated tmRNA acts like a tRNA, entering the A-site of stalled ribosomes, displacing the stalled mRNA. The ribosome then switches to translate the ORF on the tmRNA; the nascent peptide is terminated with the 'tag peptide' encoded by the tmRNA and targeted for degradation. The ribosome is freed to recommence translation, which seems to be the essential function of trans-translation. This is SsrA-binding protein from Marinobacter nauticus (strain ATCC 700491 / DSM 11845 / VT8) (Marinobacter aquaeolei).